The sequence spans 81 residues: Large ribosomal subunit protein bL31B (81 aa).

This sequence belongs to the bacterial ribosomal protein bL31 family. Type B subfamily. Part of the 50S ribosomal subunit.

This Halalkalibacterium halodurans (strain ATCC BAA-125 / DSM 18197 / FERM 7344 / JCM 9153 / C-125) (Bacillus halodurans) protein is Large ribosomal subunit protein bL31B.